Here is a 1483-residue protein sequence, read N- to C-terminus: Heme-responsive zinc finger transcription factor HAP1 (1483 aa).

The span at Met-1–Ser-50 shows a compositional bias: polar residues. The segment at Met-1 to Lys-56 is disordered. Positions 64, 67, 74, 81, 84, and 93 each coordinate Zn(2+). Positions Cys-64–Cys-93 form a DNA-binding region, zn(2)-C6 fungal-type. Positions Glu-105–Ser-134 form a coiled coil. Positions Val-162–His-176 are enriched in polar residues. A disordered region spans residues Val-162–Asn-208. Over residues Gln-177 to Asn-208 the composition is skewed to low complexity. The heme-responsive; required for HMC formation stretch occupies residues Lys-244–Ser-444. HRM repeat units lie at residues Lys-280–His-285, Lys-299–His-304, Lys-323–His-328, Arg-347–His-352, Lys-389–His-394, and Arg-415–His-420. 2 stretches are compositionally biased toward polar residues: residues Ser-432–His-447 and Gln-706–Leu-734. 2 disordered regions span residues Ser-432–His-458 and Gln-706–Gln-767. A compositionally biased stretch (low complexity) spans Asn-735–Asn-759. An HRM 7 repeat occupies Lys-1192 to Gln-1197. The disordered stretch occupies residues Thr-1384–Ser-1411. Residues Asp-1388–Ser-1411 are compositionally biased toward polar residues.

As to quaternary structure, binds DNA as a homodimer. Interacts with SRO9 and YDJ1. In the absence of heme, binds to at least four cellular proteins, including YDJ1 and SRO9, forming a high-molecular-weight complex (HMC) which results in repression of its activity and dictates its DNA-binding specificity.

It localises to the nucleus. Functionally, regulation of oxygen dependent gene expression. It modulates the expression of Iso-1 (CYP1) and Iso-2 (CYP3) cytochrome c. In response to heme, promotes transcription of genes encoding functions required for respiration, controlling oxidative damage and repression of anaerobic genes. Binds to the sequence 5'-CGGNNNTNNCGG-3'. The chain is Heme-responsive zinc finger transcription factor HAP1 (HAP1) from Saccharomyces cerevisiae (strain RM11-1a) (Baker's yeast).